A 401-amino-acid chain; its full sequence is MVKFDSGSESEMTNGDDLHINSKHEVKSRMANGNGVHNVPDHDQFQDRAEMEVLILPDLFSSLMSVPARENPHYASVKADADEWISSVINADAKWASRNKRVDFTYLASIWAPDCSAFALRTSADWNSWAFLFDDQFDEGHLSNDLDGAINEIARTREIMEGTAPRYTADSEHPIRYVFQTLCDRVKQSPEGFYAGKPSSERFYRRWMWAHELYWEGLVAQVRTNVEGRSFTRGPEEYLAMRRGSLGAYPALVNNEWAYGIDLPEEVADHPLVFEIMVIMSDQILLVNDILSYEKDLRLGVDHNMVRLLKAKGLSTQQAINEVGVMINNCYRRYYRALSELPCFGEEADRALLGYLEVEKNHALGSLLWSYKTGRYFKSKEDGARVRKTRELLIPKKMAAL.

Positions 1-21 are disordered; sequence MVKFDSGSESEMTNGDDLHIN. D134 and E139 together coordinate Mg(2+). The short motif at 134–138 is the DDXXD motif element; it reads DDQFD. Residue R242 participates in substrate binding. Mg(2+) contacts are provided by N288 and S292. Substrate is bound at residue K295. Residue D296 participates in Mg(2+) binding. 375 to 376 serves as a coordination point for substrate; that stretch reads RY.

Belongs to the terpene synthase family. Mg(2+) serves as cofactor.

The enzyme catalyses (2E,6E)-farnesyl diphosphate = (1R,4R,5S)-(-)-guaia-6,10(14)-diene + diphosphate. The protein operates within secondary metabolite biosynthesis; terpenoid biosynthesis. In terms of biological role, catalyzes the conversion of (2E,6E)-farnesyl diphosphate (FPP) to yield the bicyclic sesquiterpene guaia-6,10(14)-diene via a 1,10-cyclization, which requires the abstraction of the pyrophosphate from FPP to yield the (E,E)-germacradienyl cation. The only accepted substrate is farnesyl diphosphate (FPP). This chain is (1R,4R,5S)-(-)-guaia-6,10(14)-diene synthase, found in Fusarium proliferatum (strain ET1) (Orchid endophyte fungus).